The following is a 195-amino-acid chain: Putative EGF-like and EMI domain-containing protein 1 (195 aa).

Positions 86 to 97 (CTCKSGYQGNRC) constitute an EGF-like domain.

This chain is Putative EGF-like and EMI domain-containing protein 1 (EGFEM1P), found in Homo sapiens (Human).